Consider the following 312-residue polypeptide: Olfactory receptor 2M7 (312 aa).

Topologically, residues 1–25 (MAWENQTFNSDFLLLGIFNHSPTHT) are extracellular. An N-linked (GlcNAc...) asparagine glycan is attached at N5. The helical transmembrane segment at 26–49 (FLFFLVLAIFSVAFMGNSIMVLLI) threads the bilayer. Residues 50 to 57 (YLDTQLHT) are Cytoplasmic-facing. The helical transmembrane segment at 58–79 (PMYFLLSQLSLMDLMLICTTVP) threads the bilayer. Residues 80–100 (KMAFNYLSGSKSISMAGCATQ) are Extracellular-facing. The cysteines at positions 97 and 189 are disulfide-linked. The helical transmembrane segment at 101 to 120 (IFFYISLLGSECFLLAVMSY) threads the bilayer. Over 121–139 (DRYTAICHPLRYTNLMRPK) the chain is Cytoplasmic. A helical membrane pass occupies residues 140–158 (ICGLMTAFSWILGSTDGII). The Extracellular segment spans residues 159 to 195 (DAVATFSFSYCGSREIAHFCCDFPSLLILSCNDTSIF). Residues 196-219 (EEVIFICCIVMLVFPVAIIITSYA) form a helical membrane-spanning segment. Residues 220–236 (RVILAVIHMGSGEGRRK) are Cytoplasmic-facing. A helical transmembrane segment spans residues 237–259 (AFTTCSSHLMVVGMYYGAGLFMC). Over 260-272 (IQPTSHHSPMQDK) the chain is Extracellular. Residues 273–292 (MVSVFYTIVTPMLNPLIYSL) form a helical membrane-spanning segment. Residues 293–311 (RNKEVTRALMKILGKGKSG) lie on the Cytoplasmic side of the membrane.

Belongs to the G-protein coupled receptor 1 family.

The protein resides in the cell membrane. Odorant receptor. This is Olfactory receptor 2M7 (OR2M7) from Homo sapiens (Human).